Here is a 152-residue protein sequence, read N- to C-terminus: MLVSLGALRVLLGIFFTLTGAAKLFQVSAPVSQQMKALFEQFAEVFPLKVLGYQPDPISYQAAVGWLELLAGLLLVVGPPVLQQISNVLLILLMMGAVFTLVVLEESLSTYIPAVVCLGLLLLLDSCQFLVRTKGAVRCRNKIPGALGNPRK.

Residues 1–21 (MLVSLGALRVLLGIFFTLTGA) form the signal peptide. The next 3 helical transmembrane spans lie at 62–82 (AAVG…PPVL), 85–105 (ISNV…VVLE), and 111–131 (YIPA…QFLV).

This sequence belongs to the DoxX family.

It is found in the membrane. The sequence is that of Transmembrane protein 35B from Rattus norvegicus (Rat).